Here is a 263-residue protein sequence, read N- to C-terminus: 4-hydroxy-tetrahydrodipicolinate reductase (263 aa).

NAD(+) is bound by residues 7–12 (GFKGRM), 96–98 (GTT), and 122–125 (APNF). Histidine 152 serves as the catalytic Proton donor/acceptor. Histidine 153 contacts (S)-2,3,4,5-tetrahydrodipicolinate. The Proton donor role is filled by lysine 156. (S)-2,3,4,5-tetrahydrodipicolinate is bound at residue 162 to 163 (GT).

The protein belongs to the DapB family.

The protein localises to the cytoplasm. It catalyses the reaction (S)-2,3,4,5-tetrahydrodipicolinate + NAD(+) + H2O = (2S,4S)-4-hydroxy-2,3,4,5-tetrahydrodipicolinate + NADH + H(+). The enzyme catalyses (S)-2,3,4,5-tetrahydrodipicolinate + NADP(+) + H2O = (2S,4S)-4-hydroxy-2,3,4,5-tetrahydrodipicolinate + NADPH + H(+). It participates in amino-acid biosynthesis; L-lysine biosynthesis via DAP pathway; (S)-tetrahydrodipicolinate from L-aspartate: step 4/4. Catalyzes the conversion of 4-hydroxy-tetrahydrodipicolinate (HTPA) to tetrahydrodipicolinate. This Listeria monocytogenes serotype 4b (strain CLIP80459) protein is 4-hydroxy-tetrahydrodipicolinate reductase.